The primary structure comprises 609 residues: Snake venom metalloproteinase-disintegrin-like mocarhagin (609 aa).

Residues 1–20 (MIQALLVAICLAVFPYQGSS) form the signal peptide. The propeptide occupies 21–191 (IILESGNVND…DEPIEKSSQL (171 aa)). The 196-residue stretch at 205-400 (KYIEFYVVVD…DRPQCILNKP (196 aa)) folds into the Peptidase M12B domain. Positions 208 and 292 each coordinate Ca(2+). Residue N303 is glycosylated (N-linked (GlcNAc...) asparagine). 3 disulfide bridges follow: C316–C395, C356–C379, and C358–C363. Zn(2+) is bound by residues H341 and H345. Ca(2+) is bound by residues C395, N398, V410, N413, F415, E417, E420, and D423. The Disintegrin domain maps to 408–494 (PPVCGNYFVE…KCPKDSFQRN (87 aa)). 14 disulfide bridges follow: C411–C440, C422–C435, C424–C430, C434–C457, C448–C454, C453–C479, C466–C486, C473–C505, C498–C510, C517–C567, C532–C575, C545–C555, C562–C601, and C595–C606. The short motif at 472-474 (DCD) is the D/ECD-tripeptide element. N-linked (GlcNAc...) asparagine glycosylation occurs at N507.

Belongs to the venom metalloproteinase (M12B) family. P-III subfamily. P-IIIa sub-subfamily. As to quaternary structure, monomer. It depends on Zn(2+) as a cofactor. As to expression, expressed by the venom gland.

The protein resides in the secreted. Its activity is regulated as follows. Inhibited by EDTA and diisopropyl fluorophosphate (DFP). Also inhibited by an excess of zinc or calcium ions. Functionally, snake venom zinc metalloproteinase that inhibits platelet aggregation by cleaving platelet glycoprotein Ib alpha (GP1BA) at Glu-298/Asp-299, and abolishes binding of von Willebrand factor (VWF) to GPIBA. Cleaves P-selectin glycoprotein ligand-1 (PSGL-1/SELPLG) at Tyr-51/Asp-52, and completely abolishes the binding of PSGL-1 to P-selectin. Anionic amino acid sequences containing sulfated tyrosines are needed for cleavages. Inhibits the thrombin-induced platelet aggregation, and the thrombin-induced release of ATP and ADP. Has lectin activity (inhibited by heparin). This is Snake venom metalloproteinase-disintegrin-like mocarhagin from Naja mossambica (Mozambique spitting cobra).